A 326-amino-acid chain; its full sequence is MYSNKPSRKPHTFQFRGKQLQASDSLFFIIALLCLLPIISSPVALILGFTLASFGFVPTKLNIAAATKKLLAYSIIGLGFGIHLDQAIAASTQGFGLIVGSIFFTLIFGWFLTKALRLDQKTGHLIASGTAICGGSAIAAVAPAINARDDQTSLALATVFVLNSIALFIFPAIGHLLEMSQHAFGTWAAIAIHDTSSVVGAAGAYGDEALRTATTIKLARALWIVPIAFLSALLFKGDNKKIGIPYFILFYCLAIVFAHFVPSLESIYSHIFVASKRLLVVCLFLIGSGITIQKLRAAGLKPLLLGVLLWVAIGVGSLSYILLNVA.

10 helical membrane-spanning segments follow: residues 27–49 (FFIIALLCLLPIISSPVALILGF), 70–89 (LLAYSIIGLGFGIHLDQAIA), 94–116 (GFGLIVGSIFFTLIFGWFLTKAL), 123–145 (GHLIASGTAICGGSAIAAVAPAI), 155–177 (ALATVFVLNSIALFIFPAIGHLL), 184–206 (FGTWAAIAIHDTSSVVGAAGAYG), 216–235 (IKLARALWIVPIAFLSALLF), 242–261 (IGIPYFILFYCLAIVFAHFV), 271–290 (IFVASKRLLVVCLFLIGSGI), and 303–325 (LLLGVLLWVAIGVGSLSYILLNV).

It belongs to the UPF0324 family.

Its subcellular location is the cell membrane. The chain is UPF0324 membrane protein PBPRB0970 from Photobacterium profundum (strain SS9).